Reading from the N-terminus, the 367-residue chain is Aurora kinase (367 aa).

Positions 30–49 (TTATNGAPPQARVQPGKGYR) are disordered. The Protein kinase domain occupies 109-360 (FEIGKVLGKG…LKEVKKHPWI (252 aa)). Residues 115–123 (LGKGKFGRV) and Lys138 contribute to the ATP site. The active-site Proton acceptor is Asp232.

The protein belongs to the protein kinase superfamily. Ser/Thr protein kinase family. Aurora subfamily.

The protein resides in the nucleus. The protein localises to the cytoplasm. It localises to the cytoskeleton. Its subcellular location is the spindle. It is found in the chromosome. The protein resides in the centromere. The protein localises to the kinetochore. It carries out the reaction L-seryl-[protein] + ATP = O-phospho-L-seryl-[protein] + ADP + H(+). It catalyses the reaction L-threonyl-[protein] + ATP = O-phospho-L-threonyl-[protein] + ADP + H(+). Functionally, component of the chromosomal passenger complex (CPC), a complex that acts as a key regulator of chromosome segregation and cytokinesis. Has a role in error-correction of aberrent kinetochore-microtubule attachments to ensure that sister kinetochores become bioriented and connect to opposite poles by promoting spindle assembly checkpoint signaling. In Eremothecium gossypii (strain ATCC 10895 / CBS 109.51 / FGSC 9923 / NRRL Y-1056) (Yeast), this protein is Aurora kinase (IPL1).